The primary structure comprises 150 residues: Submaxillary gland androgen-regulated protein 2, isoform alpha (150 aa).

The first 22 residues, 1–22 (MKALYMVFVLWVLIGCFLSGEC), serve as a signal peptide directing secretion.

It is found in the secreted. Functionally, may play a role in protection or detoxification. The polypeptide is Submaxillary gland androgen-regulated protein 2, isoform alpha (Smr2) (Mus musculus (Mouse)).